A 124-amino-acid chain; its full sequence is Mitochondrial import inner membrane translocase subunit TIM16 (124 aa).

Residues 58-109 (EAQQILNISKLSPEEVQNYEHLFKVNDKSVGDSFYLQSKVVRAKERLDEELQ) are J-like. Serine 69 carries the phosphoserine modification.

Belongs to the TIM16/PAM16 family. Probable component of the PAM complex at least composed of a mitochondrial HSP70 protein, GRPEL1 or GRPEL2, TIMM44, TIMM16/PAM16 and TIMM14/DNAJC19. Interacts with DNAJC19. Directly interacts with DNAJC15; this interaction counteracts DNAJC15-dependent stimulation of HSPA9 ATPase activity. Associates with the TIM23 complex.

Its subcellular location is the mitochondrion inner membrane. In terms of biological role, regulates ATP-dependent protein translocation into the mitochondrial matrix. Inhibits DNAJC19 stimulation of HSPA9/Mortalin ATPase activity. The polypeptide is Mitochondrial import inner membrane translocase subunit TIM16 (Magmas-ps1) (Rattus norvegicus (Rat)).